The sequence spans 195 residues: ATP-dependent Clp protease proteolytic subunit 2 (195 aa).

Serine 95 acts as the Nucleophile in catalysis. The active site involves histidine 120.

Belongs to the peptidase S14 family. As to quaternary structure, fourteen ClpP subunits assemble into 2 heptameric rings which stack back to back to give a disk-like structure with a central cavity, resembling the structure of eukaryotic proteasomes.

The protein resides in the cytoplasm. It catalyses the reaction Hydrolysis of proteins to small peptides in the presence of ATP and magnesium. alpha-casein is the usual test substrate. In the absence of ATP, only oligopeptides shorter than five residues are hydrolyzed (such as succinyl-Leu-Tyr-|-NHMec, and Leu-Tyr-Leu-|-Tyr-Trp, in which cleavage of the -Tyr-|-Leu- and -Tyr-|-Trp bonds also occurs).. Cleaves peptides in various proteins in a process that requires ATP hydrolysis. Has a chymotrypsin-like activity. Plays a major role in the degradation of misfolded proteins. The chain is ATP-dependent Clp protease proteolytic subunit 2 from Methylococcus capsulatus (strain ATCC 33009 / NCIMB 11132 / Bath).